An 854-amino-acid chain; its full sequence is Protein SEY1 homolog (854 aa).

At 1–724 (MAAFSGETAV…LRNIESGKQS (724 aa)) the chain is on the cytoplasmic side. The GB1/RHD3-type G domain occupies 49–291 (GVNYHVVGVF…NSNFLFSNCS (243 aa)). 59-66 (GGQSSGKS) lines the GTP pocket. Positions 336–386 (KHAAIEEFKEVCEEYTKKIQRGDVIPQFTRALEETIERLLKNFSDQTKLYK) form a coiled coil. A helical membrane pass occupies residues 725–745 (LPPWVLPVMLLLGWNELYYLL). Residues 746–748 (TSP) lie on the Lumenal side of the membrane. The chain crosses the membrane as a helical span at residues 749–769 (ILLIAIIVIAVLFFKTFLKSQ). Residues 770–854 (LEVLEEKCPV…CRESRDKGED (85 aa)) are Cytoplasmic-facing. A disordered region spans residues 808–854 (GGGGAQFRDPTQATSVSGASAGVSSESSSAASPRRRVCRESRDKGED). The segment covering 822–839 (SVSGASAGVSSESSSAAS) has biased composition (low complexity). Positions 845 to 854 (CRESRDKGED) are enriched in basic and acidic residues.

It belongs to the TRAFAC class dynamin-like GTPase superfamily. GB1/RHD3 GTPase family. RHD3 subfamily.

The protein localises to the endoplasmic reticulum membrane. Functionally, probable GTP-binding protein that may be involved in cell development. The chain is Protein SEY1 homolog from Trypanosoma brucei brucei (strain 927/4 GUTat10.1).